A 245-amino-acid chain; its full sequence is uncharacterized protein (245 aa).

The next 6 helical transmembrane spans lie at 38–58 (IYPAFITVMALVSFIASAIFI), 68–88 (TIELAIAFLSNFYLGLTQGYF), 100–120 (IWSLAVEGQYYLIFPLILILA), 129–149 (VLFIITLILFFILLATSFVSA), 194–214 (VNNILAILSTLLLFSCLFLMN), and 217–237 (IAFIPGITLILPCIFTALIIH).

The protein belongs to the acyltransferase 3 family.

The protein localises to the cell membrane. This is an uncharacterized protein from Haemophilus influenzae (strain ATCC 51907 / DSM 11121 / KW20 / Rd).